Reading from the N-terminus, the 340-residue chain is Dihydroorotate dehydrogenase (quinone) (340 aa).

Residues 67 to 71 and threonine 91 contribute to the FMN site; that span reads AGFDK. Lysine 71 is a substrate binding site. 116-120 contributes to the substrate binding site; that stretch reads NRMGF. Residues asparagine 143 and asparagine 176 each contribute to the FMN site. Substrate is bound at residue asparagine 176. Residue serine 179 is the Nucleophile of the active site. Asparagine 181 serves as a coordination point for substrate. Positions 217 and 245 each coordinate FMN. Residue 246–247 participates in substrate binding; sequence NT. FMN contacts are provided by residues glycine 267, glycine 296, and 317–318; that span reads YT.

It belongs to the dihydroorotate dehydrogenase family. Type 2 subfamily. As to quaternary structure, monomer. The cofactor is FMN.

It is found in the cell membrane. It catalyses the reaction (S)-dihydroorotate + a quinone = orotate + a quinol. The protein operates within pyrimidine metabolism; UMP biosynthesis via de novo pathway; orotate from (S)-dihydroorotate (quinone route): step 1/1. Functionally, catalyzes the conversion of dihydroorotate to orotate with quinone as electron acceptor. The protein is Dihydroorotate dehydrogenase (quinone) of Christiangramia forsetii (strain DSM 17595 / CGMCC 1.15422 / KT0803) (Gramella forsetii).